The sequence spans 605 residues: Elongation factor 4 (605 aa).

One can recognise a tr-type G domain in the interval 10 to 192 (KNIRNFAIVA…AIVMRLPPPH (183 aa)). GTP-binding positions include 22–27 (DHGKST) and 139–142 (NKVD).

It belongs to the TRAFAC class translation factor GTPase superfamily. Classic translation factor GTPase family. LepA subfamily.

The protein resides in the cell inner membrane. The enzyme catalyses GTP + H2O = GDP + phosphate + H(+). In terms of biological role, required for accurate and efficient protein synthesis under certain stress conditions. May act as a fidelity factor of the translation reaction, by catalyzing a one-codon backward translocation of tRNAs on improperly translocated ribosomes. Back-translocation proceeds from a post-translocation (POST) complex to a pre-translocation (PRE) complex, thus giving elongation factor G a second chance to translocate the tRNAs correctly. Binds to ribosomes in a GTP-dependent manner. In Chelativorans sp. (strain BNC1), this protein is Elongation factor 4.